Here is an 859-residue protein sequence, read N- to C-terminus: Probable potassium transporter 14 (859 aa).

Positions 1–19 (METRSGGSGSASGGGGGGR) are enriched in gly residues. A disordered region spans residues 1-69 (METRSGGSGS…SRGGCSDSDD (69 aa)). At 1 to 112 (METRSGGSGS…RHQEITVGRS (112 aa)) the chain is on the cytoplasmic side. The segment covering 54-65 (PAAASGSRGGCS) has biased composition (low complexity). The helical transmembrane segment at 113–133 (IVLAVQTLGVVFGDVGTSPLY) threads the bilayer. Topologically, residues 134–155 (AFDVMFNKYPITSKEDVLGALS) are extracellular. The helical transmembrane segment at 156-176 (LVIYTLILIPLLKYTLIALWG) threads the bilayer. The Cytoplasmic segment spans residues 177–240 (NDDGEGGTFA…RLETSSMLKK (64 aa)). Residues 241–261 (LLLMLVLFGTSMVIADGVVTP) form a helical membrane-spanning segment. Topologically, residues 262–275 (AMSVMSAVNGLKVG) are extracellular. Residues 276-296 (ISSVNEGEVVMITVAVLIVLF) form a helical membrane-spanning segment. Topologically, residues 297–305 (TLQRFGSSK) are cytoplasmic. Residues 306-326 (VALAVGPALFIWFCCLAGIGI) form a helical membrane-spanning segment. The Extracellular segment spans residues 327 to 359 (YNMKTYGSAVLQAFNPMYIYYYFERNPTQAWMS). The helical transmembrane segment at 360-380 (LGGCLLCATGSEAMFADLCYF) threads the bilayer. The Cytoplasmic segment spans residues 381–388 (SVKSVQLT). Residues 389–409 (FVFLVLPCLLLGYLGQAAFLM) traverse the membrane as a helical segment. Residues 410–417 (ENLTENQQ) are Extracellular-facing. An N-linked (GlcNAc...) asparagine glycan is attached at Asn-411. Residues 418 to 438 (VFFLSIPNQAFWPVVFIAILA) traverse the membrane as a helical segment. Residues 439-478 (AIIASRTMTTAIFSTIKQATALGCFPRLKIIHTSRSFMGQ) are Cytoplasmic-facing. Residues 479-499 (IYIPMMNWFLLVSCLAFVTMF) form a helical membrane-spanning segment. The Extracellular segment spans residues 500–508 (GSINEIGNA). A helical transmembrane segment spans residues 509–531 (YGIAELGVMMMTTVLVTIIMLLI). At 532–535 (WQIN) the chain is on the cytoplasmic side. Residues 536–558 (IIVVLCFLTLSLGLELIFFSSVL) form a helical membrane-spanning segment. Residues 559–560 (GS) lie on the Extracellular side of the membrane. The helical transmembrane segment at 561 to 581 (VADGSWVLLVFAAVLYLIMYI) threads the bilayer. Residues 582-859 (WNYGTKLKYE…MMQVAMQYMV (278 aa)) are Cytoplasmic-facing. The tract at residues 752-772 (GVPPAEAAGTTEHPTIGSSMS) is disordered. Positions 763–772 (EHPTIGSSMS) are enriched in polar residues.

It belongs to the HAK/KUP transporter (TC 2.A.72.3) family.

The protein localises to the membrane. High-affinity potassium transporter. The sequence is that of Probable potassium transporter 14 (HAK14) from Oryza sativa subsp. japonica (Rice).